Reading from the N-terminus, the 34-residue chain is Photosystem II reaction center protein Y (34 aa).

Over 1 to 4 (MDIR) the chain is Lumenal. The helical transmembrane segment at 5–23 (LLIVLLPVLAAASWALYNI) threads the bilayer. Over 24-34 (GRVALQQFRSM) the chain is Stromal.

The protein belongs to the PsbY family. PSII is composed of 1 copy each of membrane proteins PsbA, PsbB, PsbC, PsbD, PsbE, PsbF, PsbH, PsbI, PsbJ, PsbK, PsbL, PsbM, PsbT, PsbX, PsbY, PsbZ, Psb30/Ycf12, at least 3 peripheral proteins of the oxygen-evolving complex and a large number of cofactors. It forms dimeric complexes.

It is found in the plastid. The protein localises to the chloroplast thylakoid membrane. Functionally, loosely associated component of the core of photosystem II (PSII), it is not always seen in crystals. PSII is a light-driven water plastoquinone oxidoreductase, using light energy to abstract electrons from H(2)O, generating a proton gradient subsequently used for ATP formation. This is Photosystem II reaction center protein Y from Gracilaria tenuistipitata var. liui (Red alga).